Reading from the N-terminus, the 184-residue chain is Fruit protein pKIWI501 (184 aa).

The segment at 1–184 (MATVEVTPAV…TEVPVDKTEE (184 aa)) is disordered. 2 stretches are compositionally biased toward low complexity: residues 25–36 (PQEPQPEAAVAA) and 53–65 (PEAV…PAAT). Residues 72–92 (EVAEAEEEVVEEPQEVPEEPV) are compositionally biased toward acidic residues. Over residues 96-119 (AAKEVEATEGKAEPTGEMKDKTPE) the composition is skewed to basic and acidic residues. Positions 120–156 (ATDAPEAPAAAEEPTDAPEAPAVAEEPTNAPEAPAVG) are enriched in low complexity. Positions 159-168 (PEAKEGKPDE) are enriched in basic and acidic residues.

To H.brasiliensis latex allergen Hev b 5.

This chain is Fruit protein pKIWI501, found in Actinidia deliciosa (Kiwi).